The chain runs to 151 residues: Deoxyuridine 5'-triphosphate nucleotidohydrolase (151 aa).

Residues 70–72, asparagine 83, 87–89, and methionine 97 each bind substrate; these read RSG and LID.

Belongs to the dUTPase family. Requires Mg(2+) as cofactor.

The enzyme catalyses dUTP + H2O = dUMP + diphosphate + H(+). The protein operates within pyrimidine metabolism; dUMP biosynthesis; dUMP from dCTP (dUTP route): step 2/2. This enzyme is involved in nucleotide metabolism: it produces dUMP, the immediate precursor of thymidine nucleotides and it decreases the intracellular concentration of dUTP so that uracil cannot be incorporated into DNA. The protein is Deoxyuridine 5'-triphosphate nucleotidohydrolase of Stutzerimonas stutzeri (strain A1501) (Pseudomonas stutzeri).